A 426-amino-acid polypeptide reads, in one-letter code: Enolase (426 aa).

Glutamine 165 is a binding site for (2R)-2-phosphoglycerate. Glutamate 209 acts as the Proton donor in catalysis. Mg(2+)-binding residues include aspartate 244, glutamate 287, and aspartate 313. The (2R)-2-phosphoglycerate site is built by lysine 338, arginine 367, serine 368, and lysine 389. Lysine 338 (proton acceptor) is an active-site residue.

The protein belongs to the enolase family. The cofactor is Mg(2+).

The protein resides in the cytoplasm. It localises to the secreted. The protein localises to the cell surface. It carries out the reaction (2R)-2-phosphoglycerate = phosphoenolpyruvate + H2O. The protein operates within carbohydrate degradation; glycolysis; pyruvate from D-glyceraldehyde 3-phosphate: step 4/5. Catalyzes the reversible conversion of 2-phosphoglycerate (2-PG) into phosphoenolpyruvate (PEP). It is essential for the degradation of carbohydrates via glycolysis. The polypeptide is Enolase (Methanococcus maripaludis (strain C7 / ATCC BAA-1331)).